Reading from the N-terminus, the 173-residue chain is Disulfide bond formation protein B (173 aa).

Over 1-16 the chain is Cytoplasmic; that stretch reads MRILSSLKTFSQSRLS. The chain crosses the membrane as a helical span at residues 17–33; the sequence is WLLLLAFVVFFTLCAMY. The Periplasmic segment spans residues 34–51; it reads FQHVMLLAPCVMCIYERI. A disulfide bridge links C43 with C46. Residues 52 to 67 form a helical membrane-spanning segment; it reads AMLGIGVAALIGAIAP. Over 68–74 the chain is Cytoplasmic; it reads QNPVVRW. Residues 75-92 form a helical membrane-spanning segment; the sequence is LGFAAWGASSYKGLMLAI. Over 93 to 147 the chain is Periplasmic; sequence EHVNYQFNPSPFATCDLFVTFPAWAPLNQWAPNLFEAYGDCSKVVWQFLTLSMPQ. C107 and C133 are joined by a disulfide. Residues 148–166 form a helical membrane-spanning segment; that stretch reads WLVVIFAANLLALAIFVVA. Over 167–173 the chain is Cytoplasmic; that stretch reads QLAKTSR.

It belongs to the DsbB family.

Its subcellular location is the cell inner membrane. Its function is as follows. Required for disulfide bond formation in some periplasmic proteins. Acts by oxidizing the DsbA protein. This Vibrio cholerae serotype O1 (strain ATCC 39315 / El Tor Inaba N16961) protein is Disulfide bond formation protein B.